The chain runs to 275 residues: Axin interactor, dorsalization-associated protein (275 aa).

Residues 97–107 (NLEFEEDEEEG) show a composition bias toward acidic residues. The interval 97 to 125 (NLEFEEDEEEGGAGAGSPDSFPARVPGTL) is disordered. The residue at position 113 (Ser113) is a Phosphoserine. The axin-binding stretch occupies residues 123-190 (GTLLPRLPSE…RKEDTYVHFN (68 aa)). Positions 126–273 (LPRLPSEPGM…LYLHLHQTLH (148 aa)) constitute a C2 Aida-type domain.

The protein belongs to the AIDA family. Interacts with AXIN1.

Its function is as follows. Acts as a ventralizing factor during embryogenesis. Inhibits axin-mediated JNK activation by binding axin and disrupting axin homodimerization. This in turn antagonizes a Wnt/beta-catenin-independent dorsalization pathway activated by AXIN/JNK-signaling. The sequence is that of Axin interactor, dorsalization-associated protein (AIDA) from Macaca fascicularis (Crab-eating macaque).